A 439-amino-acid chain; its full sequence is Dolichyl-diphosphooligosaccharide--protein glycosyltransferase 48 kDa subunit (439 aa).

Residues 1–26 form the signal peptide; that stretch reads MEPSTAARAWALFWLLPPLLGAVCAS. Over 27–410 the chain is Lumenal; sequence GPRTLVLLDN…YERFIPSAYP (384 aa). A helical transmembrane segment spans residues 411–430; that stretch reads YYASAFSMMLGLFIFSIVFL. Topologically, residues 431–439 are cytoplasmic; that stretch reads HMKEKEKSD.

It belongs to the DDOST 48 kDa subunit family. As to quaternary structure, component of the oligosaccharyltransferase (OST) complex. OST exists in two different complex forms which contain common core subunits RPN1, RPN2, OST48, OST4, DAD1 and TMEM258, either STT3A or STT3B as catalytic subunits, and form-specific accessory subunits. STT3A complex assembly occurs through the formation of 3 subcomplexes. Subcomplex 1 contains RPN1 and TMEM258, subcomplex 2 contains the STT3A-specific subunits STT3A, DC2/OSTC, and KCP2 as well as the core subunit OST4, and subcomplex 3 contains RPN2, DAD1, and OST48. The STT3A complex can form stable complexes with the Sec61 complex or with both the Sec61 and TRAP complexes. Interacts with SMIM22.

The protein resides in the endoplasmic reticulum membrane. The protein operates within protein modification; protein glycosylation. In terms of biological role, subunit of the oligosaccharyl transferase (OST) complex that catalyzes the initial transfer of a defined glycan (Glc(3)Man(9)GlcNAc(2) in eukaryotes) from the lipid carrier dolichol-pyrophosphate to an asparagine residue within an Asn-X-Ser/Thr consensus motif in nascent polypeptide chains, the first step in protein N-glycosylation. N-glycosylation occurs cotranslationally and the complex associates with the Sec61 complex at the channel-forming translocon complex that mediates protein translocation across the endoplasmic reticulum (ER). All subunits are required for a maximal enzyme activity. Required for the assembly of both SST3A- and SS3B-containing OST complexes. This chain is Dolichyl-diphosphooligosaccharide--protein glycosyltransferase 48 kDa subunit, found in Pongo abelii (Sumatran orangutan).